The sequence spans 433 residues: 3-phosphoshikimate 1-carboxyvinyltransferase (433 aa).

Residues Lys22, Ser23, and Arg27 each contribute to the 3-phosphoshikimate site. Lys22 contributes to the phosphoenolpyruvate binding site. Residues Gly95 and Arg123 each coordinate phosphoenolpyruvate. 3-phosphoshikimate-binding residues include Ser167, Gln169, Asp315, and Lys342. Gln169 serves as a coordination point for phosphoenolpyruvate. Asp315 serves as the catalytic Proton acceptor. 2 residues coordinate phosphoenolpyruvate: Arg346 and Arg387.

This sequence belongs to the EPSP synthase family. As to quaternary structure, monomer.

It localises to the cytoplasm. It carries out the reaction 3-phosphoshikimate + phosphoenolpyruvate = 5-O-(1-carboxyvinyl)-3-phosphoshikimate + phosphate. It functions in the pathway metabolic intermediate biosynthesis; chorismate biosynthesis; chorismate from D-erythrose 4-phosphate and phosphoenolpyruvate: step 6/7. Its function is as follows. Catalyzes the transfer of the enolpyruvyl moiety of phosphoenolpyruvate (PEP) to the 5-hydroxyl of shikimate-3-phosphate (S3P) to produce enolpyruvyl shikimate-3-phosphate and inorganic phosphate. In Legionella pneumophila subsp. pneumophila (strain Philadelphia 1 / ATCC 33152 / DSM 7513), this protein is 3-phosphoshikimate 1-carboxyvinyltransferase.